A 178-amino-acid chain; its full sequence is Deoxycytidylate deaminase (178 aa).

In terms of domain architecture, CMP/dCMP-type deaminase spans 14–145 (EWPEYFMAVA…EETTAARLLF (132 aa)). A Zn(2+)-binding site is contributed by His84. Residue Glu86 is the Proton donor of the active site. Positions 110 and 113 each coordinate Zn(2+). Residue Ser174 is modified to Phosphoserine.

This sequence belongs to the cytidine and deoxycytidylate deaminase family. Homohexamer. It depends on Zn(2+) as a cofactor.

The enzyme catalyses dCMP + H2O + H(+) = dUMP + NH4(+). It carries out the reaction 5-hydroxymethyl-dCMP + H2O + H(+) = 5-hydroxymethyl-dUMP + NH4(+). With respect to regulation, allosteric enzyme whose activity is greatly influenced by the end products of its metabolic pathway, dCTP and dTTP. In terms of biological role, catalyzes the deamination of dCMP to dUMP, providing the nucleoside monophosphate substrate for the thymidylate synthase/TYMS. Also, part of a nucleotide salvage pathway that eliminates epigenetically modified 5-hydroxymethyl-dCMP (hmdCMP) in a two-step process entailing deamination to cytotoxic 5-hydroxymethyl-dUMP (hmdUMP), followed by its hydrolysis into 5-hydroxymethyluracil (hmU) and 2-deoxy-D-ribose 5-phosphate (deoxyribosephosphate). Catalyzes the first step in that pathway, the deamination of 5-hydroxymethyl-dCMP (hmdCMP). This is Deoxycytidylate deaminase from Mus musculus (Mouse).